Reading from the N-terminus, the 856-residue chain is Rod cGMP-specific 3',5'-cyclic phosphodiesterase subunit beta (856 aa).

The residue at position 2 (serine 2) is an N-acetylserine. 2 consecutive GAF domains span residues asparagine 71–leucine 220 and aspartate 252–valine 429. Residues glutamate 481–tyrosine 814 enclose the PDEase domain. Histidine 557 serves as the catalytic Proton donor. 4 residues coordinate a divalent metal cation: histidine 561, histidine 597, aspartate 598, and aspartate 718. Residue cysteine 853 is the site of S-geranylgeranyl cysteine attachment. A propeptide spans cysteine 854–leucine 856 (removed in mature form).

It belongs to the cyclic nucleotide phosphodiesterase family. Oligomer composed of two catalytic chains (alpha and beta), an inhibitory chain (gamma) and the delta chain. A divalent metal cation is required as a cofactor.

It localises to the membrane. The protein resides in the cell projection. It is found in the cilium. The protein localises to the photoreceptor outer segment. It catalyses the reaction 3',5'-cyclic GMP + H2O = GMP + H(+). Its function is as follows. Rod-specific cGMP phosphodiesterase that catalyzes the hydrolysis of 3',5'-cyclic GMP. Necessary for the formation of a functional phosphodiesterase holoenzyme. Involved in retinal circadian rhythm photoentrainment via modulation of UVA and orange light-induced phase-shift of the retina clock. May participate in processes of transmission and amplification of the visual signal. The chain is Rod cGMP-specific 3',5'-cyclic phosphodiesterase subunit beta from Mus musculus (Mouse).